Reading from the N-terminus, the 645-residue chain is Minor extracellular protease Epr (645 aa).

The first 27 residues, 1–27 (MKNMSCKLVVSVTLFFSFLTIGPLAHA), serve as a signal peptide directing secretion. Residues 28-103 (QNSSEKEVIV…AADSTDFKVL (76 aa)) constitute a propeptide that is removed on maturation. The region spanning 115–382 (QWNLEPIQVK…YGLIQYKAQA (268 aa)) is the Peptidase S8 domain. Active-site charge relay system residues include aspartate 142, histidine 172, and serine 326. Disordered stretches follow at residues 490–577 (KQAK…KTAL) and 591–645 (AEAK…KPKK). Residues 491-508 (QAKDKVAKAEKSKKKTDV) show a composition bias toward basic and acidic residues. A compositionally biased stretch (polar residues) spans 522–547 (SEKTSLQKRLNKVKSTNLKTAQQSVS). Residues 592–610 (EAKKVETAKAKVKKAEKDK) show a composition bias toward basic and acidic residues.

It belongs to the peptidase S8 family. In terms of processing, may undergo two steps of processing in its passage through the cell membrane: removal of the N-terminal signal sequence and cleavage of the C-terminal domain. Several active forms of Epr with molecular masses between 40 and 34 kDa were found in the medium of B.subtilis cultures. The size variation of the active forms expressed by the complete epr gene appears to be the result of partial removal of the C-terminus either by processing or degradation.

The protein resides in the secreted. Its subcellular location is the cell wall. Its activity is regulated as follows. Requires Ca(2+) for stability. Activity is inhibited by phenylmethylsulfonyl fluoride (PMSF) and EDTA. Functionally, serine protease. Involved in the production of the competence and sporulation stimulating factor CSF. In addition, is essential for swarming motility. Plays a key role in DegU-mediated swarming motility. The protease activity is dispensable for swarming. Not essential for growth or sporulation. In Bacillus subtilis (strain 168), this protein is Minor extracellular protease Epr.